The sequence spans 446 residues: N-succinylarginine dihydrolase (446 aa).

Residues 19 to 28 (AGLSFGNVAS), N110, and 137 to 138 (HR) each bind substrate. Residue E174 is part of the active site. R213 is a substrate binding site. Residue H249 is part of the active site. D251 and N364 together coordinate substrate. Catalysis depends on C370, which acts as the Nucleophile.

This sequence belongs to the succinylarginine dihydrolase family. Homodimer.

The enzyme catalyses N(2)-succinyl-L-arginine + 2 H2O + 2 H(+) = N(2)-succinyl-L-ornithine + 2 NH4(+) + CO2. It participates in amino-acid degradation; L-arginine degradation via AST pathway; L-glutamate and succinate from L-arginine: step 2/5. Catalyzes the hydrolysis of N(2)-succinylarginine into N(2)-succinylornithine, ammonia and CO(2). The chain is N-succinylarginine dihydrolase from Burkholderia cenocepacia (strain ATCC BAA-245 / DSM 16553 / LMG 16656 / NCTC 13227 / J2315 / CF5610) (Burkholderia cepacia (strain J2315)).